The sequence spans 278 residues: Putative transposase for insertion sequence element IS986/IS6110 (278 aa).

The Integrase catalytic domain maps to G101–Y268.

Functionally, involved in the transposition of the insertion sequence. This is Putative transposase for insertion sequence element IS986/IS6110 from Mycobacterium tuberculosis (strain CDC 1551 / Oshkosh).